The chain runs to 345 residues: MNINDILKKLINKSDLEIDEAEELAKAIIRGEVPEILVSAILVALRMKGESKNEIVGFARAMRELAIKIDVPNAIDTAGTGGDGLGTVNVSTASAILLSLINPVAKHGNRAVSGKSGSADVLEALGYNIIVPPERAKELVHKTNFVFLFSQYYHPAMKNVANVRKTLGIRTIFNILGPLTNPANAKYQLMGVFSKDHLDLLSKSAYELDFNKVILVHGEPGIDEVSPIGKTFMKIVSKRGIEEVKFDVTDFGISSIPIDKLIVNSAEDSAIKIVRAFLGKDEHVAEFIKINTAVALFALDKVSDFKEGYEYAKYLIENSVNKLNEIISLNGDLTKLKTIMVKSSG.

5-phospho-alpha-D-ribose 1-diphosphate is bound by residues Gly79, 82–83 (GD), Thr87, 89–92 (NVST), 106–114 (KHGNRAVSG), and Ser118. Gly79 is a binding site for anthranilate. Ser91 contributes to the Mg(2+) binding site. Residue Asn109 coordinates anthranilate. Arg164 is an anthranilate binding site. Positions 223 and 224 each coordinate Mg(2+).

The protein belongs to the anthranilate phosphoribosyltransferase family. In terms of assembly, homodimer. Requires Mg(2+) as cofactor.

It carries out the reaction N-(5-phospho-beta-D-ribosyl)anthranilate + diphosphate = 5-phospho-alpha-D-ribose 1-diphosphate + anthranilate. The protein operates within amino-acid biosynthesis; L-tryptophan biosynthesis; L-tryptophan from chorismate: step 2/5. Catalyzes the transfer of the phosphoribosyl group of 5-phosphorylribose-1-pyrophosphate (PRPP) to anthranilate to yield N-(5'-phosphoribosyl)-anthranilate (PRA). In Saccharolobus islandicus (strain M.16.27) (Sulfolobus islandicus), this protein is Anthranilate phosphoribosyltransferase.